Here is a 1088-residue protein sequence, read N- to C-terminus: RNA-directed RNA polymerase (1088 aa).

In terms of domain architecture, RdRp catalytic spans 501–687; sequence LSYGDVTRFL…AKRYIAGGKI (187 aa).

This sequence belongs to the reoviridae RNA-directed RNA polymerase family. Interacts with VP3 (Potential). Interacts with VP2; this interaction activates VP1. Interacts with NSP5; this interaction is probably necessary for the formation of functional virus factories. Interacts with NSP2; this interaction is weak. Requires Mg(2+) as cofactor.

It localises to the virion. The enzyme catalyses RNA(n) + a ribonucleoside 5'-triphosphate = RNA(n+1) + diphosphate. Functionally, RNA-directed RNA polymerase that is involved in both transcription and genome replication. Together with VP3 capping enzyme, forms an enzyme complex positioned near the channels situated at each of the five-fold vertices of the core. Following infection, the outermost layer of the virus is lost, leaving a double-layered particle (DLP) made up of the core and VP6 shell. VP1 then catalyzes the transcription of fully conservative plus-strand genomic RNAs that are extruded through the DLP's channels into the cytoplasm where they function as mRNAs for translation of viral proteins. One copy of each of the viral (+)RNAs is also recruited during core assembly, together with newly synthesized polymerase complexes and VP2. The polymerase of these novo-formed particles catalyzes the synthesis of complementary minus-strands leading to dsRNA formation. To do so, the polymerase specifically recognizes and binds 4 bases 5'-UGUG-3' in the conserved 3'-sequence of plus-strand RNA templates. VP2 presumably activates the autoinhibited VP1-RNA complex to coordinate packaging and genome replication. Once dsRNA synthesis is complete, the polymerase switches to the transcriptional mode, thus providing secondary transcription. This chain is RNA-directed RNA polymerase, found in Rotavirus A (strain RVA/Cow/United States/NCDV-Lincoln/1969/G6P6[1]) (RV-A).